The primary structure comprises 699 residues: Elongation factor G 2 (699 aa).

In terms of domain architecture, tr-type G spans 8–290 (ERYRNIGICA…AVIEYLPSPT (283 aa)). GTP contacts are provided by residues 17-24 (AHVDAGKT), 88-92 (DTPGH), and 142-145 (NKMD).

It belongs to the TRAFAC class translation factor GTPase superfamily. Classic translation factor GTPase family. EF-G/EF-2 subfamily.

The protein localises to the cytoplasm. In terms of biological role, catalyzes the GTP-dependent ribosomal translocation step during translation elongation. During this step, the ribosome changes from the pre-translocational (PRE) to the post-translocational (POST) state as the newly formed A-site-bound peptidyl-tRNA and P-site-bound deacylated tRNA move to the P and E sites, respectively. Catalyzes the coordinated movement of the two tRNA molecules, the mRNA and conformational changes in the ribosome. In Colwellia psychrerythraea (strain 34H / ATCC BAA-681) (Vibrio psychroerythus), this protein is Elongation factor G 2.